A 357-amino-acid chain; its full sequence is Peptide chain release factor 1 (357 aa).

Glutamine 236 is subject to N5-methylglutamine.

Belongs to the prokaryotic/mitochondrial release factor family. In terms of processing, methylated by PrmC. Methylation increases the termination efficiency of RF1.

The protein resides in the cytoplasm. In terms of biological role, peptide chain release factor 1 directs the termination of translation in response to the peptide chain termination codons UAG and UAA. This chain is Peptide chain release factor 1, found in Mycobacterium sp. (strain JLS).